The sequence spans 347 residues: HTH-type transcriptional regulator PhcA (347 aa).

Residues 1-61 enclose the HTH lysR-type domain; sequence MVNVDTKLLV…IRVPHGLTPT (61 aa). Residues 21–40 constitute a DNA-binding region (H-T-H motif); the sequence is ATYVAEKMHMTAPAVSHSLG. The disordered stretch occupies residues 316-347; it reads PMHPPMLTDDSGKSGKTGKGDAEKEDESRLSV. Positions 325 to 347 are enriched in basic and acidic residues; it reads DSGKSGKTGKGDAEKEDESRLSV.

It belongs to the LysR transcriptional regulatory family.

Regulates the transcription of one or more of the genes involved in virulence. The sequence is that of HTH-type transcriptional regulator PhcA (phcA) from Ralstonia nicotianae (strain ATCC BAA-1114 / GMI1000) (Ralstonia solanacearum).